A 148-amino-acid chain; its full sequence is Snaclec alboaggregin-D subunit beta (148 aa).

The N-terminal stretch at 1–23 (MGRFISVSFGLLVVFLSLSGAGA) is a signal peptide. C27 and C38 are joined by a disulfide. In terms of domain architecture, C-type lectin spans 34–145 (YDLYCYKVFK…CNSTYSFVCK (112 aa)). N-linked (GlcNAc...) asparagine glycosylation occurs at N47. Disulfide bonds link C55–C144 and C121–C136. N137 carries N-linked (GlcNAc...) asparagine glycosylation.

Tetramer of heterodimers of alpha and beta subunits (alphabeta)(4); disulfide-linked. Expressed by the venom gland.

It is found in the secreted. Functionally, snaclec that induces human platelet aggregation in the absence of any cofactor with the EC(50) of 0.25 nM and causes tyrosine phosphorylation in human platelets. Antibodies against either platelet GPIbalpha (GP1BA) or GPVI (GP6) inhibit alboaggregin D-induced platelet aggregation. Only the combination of these two antibodies completely inhibit aggregation, suggesting that it acts through both GPIbalpha (GP1BA) and GPVI (GP6). The polypeptide is Snaclec alboaggregin-D subunit beta (Trimeresurus albolabris (White-lipped pit viper)).